The chain runs to 668 residues: MYDPARDSWEERDGDEARSCRGRLASDQPHAVFSPPEQIHGASGENNNTTDLQQHPDPSSKTTASAEVLYAESQPAQPTTQTPPSVSTRIQSPVDPAAQKASNPQSLTSTAQNQLNKSNTTMENTSGSATPKPRADPSDKPNRPVQVASPTDQNGSQGDKKRKLPAEENASEKSQPAPDRPVSKRKRMEERHQKLRKRGRTPPSAYSRRDAEETSSAADRNGPTYRSTSPLPPPRSPTPEDQPRQRKRPGGGARMGLVDRETLRRRQEERERAQVEEAMRASQSRGVADVVRQHYNAVPQRGREWRKTESKIKGLRSFNNWVKSTLIQKFSPDEEFLARFNGTKEWAEDGGVPPVEEKRLLVVDLGCGKGGDLGKWQLAPQPVDLYVGLDPAEVSIVQARERYNGMKSGRGNRGRRNPIFHAEFRPKDCFGEWLGDVDIVQQVGIDPNVGPGGSVMSSRWGGGGFDVVASMFTIHYAFESEEKARQMLRNVAGCLKKGGRFLGVCPNSDVISARVSEINAKKKARQAQAKKEKSDEAPEDGEVEEDDGKVEWGNQIYRVRFPITPPEDGVFRPPFGWKYSYFMEEAVEEVPEYVVPWEAFRALTEDYNLELQYRKPFLDIWRDEKDDPELGPLSERMGVRDRVTGKLLMTEEEKEAASFYHAFCFYKV.

Residues 1 to 19 are compositionally biased toward basic and acidic residues; that stretch reads MYDPARDSWEERDGDEARS. A disordered region spans residues 1-281; sequence MYDPARDSWE…RAQVEEAMRA (281 aa). Positions 44–65 are enriched in polar residues; that stretch reads GENNNTTDLQQHPDPSSKTTAS. Residues 73-88 are compositionally biased toward low complexity; the sequence is SQPAQPTTQTPPSVST. The span at 100 to 129 shows a compositional bias: polar residues; the sequence is KASNPQSLTSTAQNQLNKSNTTMENTSGSA. The segment covering 133–142 has biased composition (basic and acidic residues); sequence PRADPSDKPN. Residues 148–157 are compositionally biased toward polar residues; the sequence is ASPTDQNGSQ. The segment covering 257-279 has biased composition (basic and acidic residues); that stretch reads LVDRETLRRRQEERERAQVEEAM. Residues 310 to 668 enclose the mRNA cap 0 methyltransferase domain; it reads SKIKGLRSFN…FYHAFCFYKV (359 aa). 319–320 is a binding site for mRNA; it reads NN. Residues K323, G366, D390, D428, 471–473, and Y476 contribute to the S-adenosyl-L-methionine site; that span reads MFT. The segment at 524-547 is disordered; it reads ARQAQAKKEKSDEAPEDGEVEEDD. Over residues 537–547 the composition is skewed to acidic residues; sequence APEDGEVEEDD.

It belongs to the class I-like SAM-binding methyltransferase superfamily. mRNA cap 0 methyltransferase family.

The protein localises to the nucleus. It catalyses the reaction a 5'-end (5'-triphosphoguanosine)-ribonucleoside in mRNA + S-adenosyl-L-methionine = a 5'-end (N(7)-methyl 5'-triphosphoguanosine)-ribonucleoside in mRNA + S-adenosyl-L-homocysteine. In terms of biological role, responsible for methylating the 5'-cap structure of mRNAs. The sequence is that of mRNA cap guanine-N(7) methyltransferase (abd1) from Aspergillus fumigatus (strain ATCC MYA-4609 / CBS 101355 / FGSC A1100 / Af293) (Neosartorya fumigata).